The chain runs to 647 residues: DNA mismatch repair protein MutL (647 aa).

The interval 375 to 433 (KQEEPQAVKQPTQLWQPPKQEWQPPQSLVREEQSWQPSTKPIIEEPIQEEKSWDSNEEG) is disordered. Over residues 387–400 (QLWQPPKQEWQPPQ) the composition is skewed to low complexity.

The protein belongs to the DNA mismatch repair MutL/HexB family.

Its function is as follows. This protein is involved in the repair of mismatches in DNA. It is required for dam-dependent methyl-directed DNA mismatch repair. May act as a 'molecular matchmaker', a protein that promotes the formation of a stable complex between two or more DNA-binding proteins in an ATP-dependent manner without itself being part of a final effector complex. This chain is DNA mismatch repair protein MutL, found in Bacillus cereus (strain AH820).